A 512-amino-acid polypeptide reads, in one-letter code: Retinaldehyde dehydrogenase 3 (512 aa).

The disordered stretch occupies residues 1–22; it reads MATTNGAVENGQPDGKPPALPR. Position 2 is an N-acetylalanine (Ala2). Residues Lys204, Glu207, and 257–262 each bind NAD(+); that span reads GSTEVG. The active-site Proton acceptor is the Glu280. Residue Cys314 is the Nucleophile of the active site. NAD(+)-binding residues include Gln361 and Glu411.

This sequence belongs to the aldehyde dehydrogenase family. As to quaternary structure, homotetramer. Detected in embryonic head (at protein level). Ventral retina.

It localises to the cytoplasm. The enzyme catalyses retinal + NAD(+) + H2O = retinoate + NADH + 2 H(+). The catalysed reaction is all-trans-retinal + NAD(+) + H2O = all-trans-retinoate + NADH + 2 H(+). It carries out the reaction all-trans-13,14-dihydroretinal + NAD(+) + H2O = all-trans-13,14-dihydroretinoate + NADH + 2 H(+). The protein operates within cofactor metabolism; retinol metabolism. Its function is as follows. Catalyzes the NAD-dependent oxidation of aldehyde substrates, such as all-trans-retinal and all-trans-13,14-dihydroretinal, to their corresponding carboxylic acids, all-trans-retinoate and all-trans-13,14-dihydroretinoate, respectively. High specificity for all-trans-retinal as substrate, can also accept acetaldehyde as substrate in vitro but with lower affinity. Required for the biosynthesis of normal levels of retinoate in the embryonic ocular and nasal regions; a critical lipid in the embryonic development of the eye and the nasal region. The chain is Retinaldehyde dehydrogenase 3 (Aldh1a3) from Mus musculus (Mouse).